Consider the following 5596-residue polypeptide: Midasin (5596 aa).

At M1 the chain carries N-acetylmethionine. AAA-ATPase protomer stretches follow at residues 307–591 (SVCK…TSKL), 659–978 (LIEQ…ASNP), 1048–1316 (KEPT…QEEI), and 1362–1616 (HIVW…NKMG). 329 to 336 (GPIGCGKT) provides a ligand contact to ATP. The tract at residues 517 to 537 (SSVGCEQAPEEVSEARRENKR) is disordered. Residues 677 to 684 (GETGTGKT) and 1084 to 1091 (GETSVGKT) contribute to the ATP site. Residue T1177 is modified to Phosphothreonine. 1390-1397 (GDTGCGKT) contacts ATP. K1683 carries the N6-acetyllysine modification. 2 AAA-ATPase protomer regions span residues 1738 to 1995 (RLLR…AVFK) and 2053 to 2313 (MKCV…IYIS). Residues 1753–1760 (GSPGVGKT) and 2066–2073 (GPASVGKT) contribute to the ATP site. S1754 carries the post-translational modification Phosphoserine. The interval 2418–4691 (SLRAHETWGD…EGEGMKDVSD (2274 aa)) is linker. Residues 3989 to 4008 (LVESDKEEQPDFLPRPTDGA) form a disordered region. Phosphothreonine is present on T4212. S4538 is modified (phosphoserine). Disordered stretches follow at residues 4669–4688 (ATEFHDYEGGGIGEGEGMKD) and 4700–5260 (EDTF…SRES). Positions 4702 to 4724 (TFQKGQEKDKEDPDSKSDIKGED) are enriched in basic and acidic residues. Residues 4741-4757 (ELEEQEEDDEKSDSEGG) are compositionally biased toward acidic residues. Residues S4752 and S4754 each carry the phosphoserine modification. Basic and acidic residues predominate over residues 4758-4780 (DLDKHMGDLNGEEADKLDERLWG). A compositionally biased stretch (acidic residues) spans 4781–4794 (DDDEEEDEEEEDNK). Residues 4822–4834 (NKDKSQQDKKEEK) show a composition bias toward basic and acidic residues. A compositionally biased stretch (acidic residues) spans 4835 to 4844 (EEAEADDGGQ). Residues 4845–4855 (GEDKINEQIDE) show a composition bias toward basic and acidic residues. The segment covering 4877–4888 (EALDLPDDLNLD) has biased composition (acidic residues). S4889 is subject to Phosphoserine. Residues 4896–4908 (EDTDNEEGEEENP) show a composition bias toward acidic residues. T4898 carries the post-translational modification Phosphothreonine. Basic and acidic residues predominate over residues 4909–4928 (LEIKEKPEEAGHEAEERGET). A phosphoserine mark is found at S4937 and S4946. Residues 4940-4966 (EPEEGPSEDDKAEGEEEMDTGADDQDG) are compositionally biased toward acidic residues. The span at 4968-4989 (AAQHPEEHSEEQQQSVEEKDKE) shows a compositional bias: basic and acidic residues. Residues 5007–5021 (QEEEEREDSDTEEQV) show a composition bias toward acidic residues. Residue S5015 is modified to Phosphoserine. The segment covering 5033-5046 (CGQTGVENMQNTQA) has biased composition (polar residues). Positions 5054–5064 (PEKEQGKEEHG) are enriched in basic and acidic residues. Basic residues predominate over residues 5088-5101 (KHTRKNTQSFKRKP). Residues 5105–5115 (DNERSMGDHNE) are compositionally biased toward basic and acidic residues. The span at 5132-5141 (QGPAQQPQAQ) shows a compositional bias: low complexity. The segment covering 5181–5197 (QEEEEIEDTLMDTEEQE) has biased composition (acidic residues). 2 stretches are compositionally biased toward basic and acidic residues: residues 5198-5213 (EFKAADVEQLKPEEIK) and 5233-5260 (KTEEDQDPRTDKAHKETENEKPERSRES). The region spanning 5384–5583 (QICLAIDDSS…ALPETLSDAL (200 aa)) is the VWFA domain.

It belongs to the midasin family. As to quaternary structure, associates with pre-60S ribosomes in the nucleoplasm. Interacts (via its hexameric AAA ATPase ring) with the PELP1 complex (via PELP1); the interaction is regulated by SUMO conjugation of PELP1 and is crucial for recruitment of MDN1 to the pre-ribosomal particle. Interacts (via VWFA/MIDAS domain) with WDR12 (via UBL domain). Interacts (via VWFA/MIDAS domain) with NLE1 (via UBL domain).

Its subcellular location is the nucleus. It localises to the nucleolus. It is found in the nucleoplasm. The protein resides in the cytoplasm. In terms of biological role, nuclear chaperone required for maturation and nuclear export of pre-60S ribosome subunits. Functions at successive maturation steps to remove ribosomal factors at critical transition points, first driving the exit of early pre-60S particles from the nucleolus and then driving late pre-60S particles from the nucleus. At an early stage in 60S maturation, mediates the dissociation of the PeBoW complex (PES1-BOP1-WDR12) from early pre-60S particles, rendering them competent for export from the nucleolus to the nucleoplasm. Subsequently recruited to the nucleoplasmic particles through interaction with SUMO-conjugated PELP1 complex. This binding is only possible if the 5S RNP at the central protuberance has undergone the rotation to complete its maturation. This Homo sapiens (Human) protein is Midasin (MDN1).